Consider the following 435-residue polypeptide: Methylenetetrahydrofolate--tRNA-(uracil-5-)-methyltransferase TrmFO (435 aa).

9-14 (GAGLAG) serves as a coordination point for FAD.

This sequence belongs to the MnmG family. TrmFO subfamily. FAD serves as cofactor.

Its subcellular location is the cytoplasm. The enzyme catalyses uridine(54) in tRNA + (6R)-5,10-methylene-5,6,7,8-tetrahydrofolate + NADH + H(+) = 5-methyluridine(54) in tRNA + (6S)-5,6,7,8-tetrahydrofolate + NAD(+). It catalyses the reaction uridine(54) in tRNA + (6R)-5,10-methylene-5,6,7,8-tetrahydrofolate + NADPH + H(+) = 5-methyluridine(54) in tRNA + (6S)-5,6,7,8-tetrahydrofolate + NADP(+). Functionally, catalyzes the folate-dependent formation of 5-methyl-uridine at position 54 (M-5-U54) in all tRNAs. The polypeptide is Methylenetetrahydrofolate--tRNA-(uracil-5-)-methyltransferase TrmFO (Staphylococcus aureus (strain MRSA252)).